We begin with the raw amino-acid sequence, 490 residues long: Aspartyl/glutamyl-tRNA(Asn/Gln) amidotransferase subunit B (490 aa).

It belongs to the GatB/GatE family. GatB subfamily. As to quaternary structure, heterotrimer of A, B and C subunits.

It catalyses the reaction L-glutamyl-tRNA(Gln) + L-glutamine + ATP + H2O = L-glutaminyl-tRNA(Gln) + L-glutamate + ADP + phosphate + H(+). The enzyme catalyses L-aspartyl-tRNA(Asn) + L-glutamine + ATP + H2O = L-asparaginyl-tRNA(Asn) + L-glutamate + ADP + phosphate + 2 H(+). Its function is as follows. Allows the formation of correctly charged Asn-tRNA(Asn) or Gln-tRNA(Gln) through the transamidation of misacylated Asp-tRNA(Asn) or Glu-tRNA(Gln) in organisms which lack either or both of asparaginyl-tRNA or glutaminyl-tRNA synthetases. The reaction takes place in the presence of glutamine and ATP through an activated phospho-Asp-tRNA(Asn) or phospho-Glu-tRNA(Gln). The polypeptide is Aspartyl/glutamyl-tRNA(Asn/Gln) amidotransferase subunit B (Synechococcus sp. (strain JA-3-3Ab) (Cyanobacteria bacterium Yellowstone A-Prime)).